Reading from the N-terminus, the 444-residue chain is Transcriptional regulatory protein GlrR (444 aa).

A Response regulatory domain is found at H7–L121. D56 is modified (4-aspartylphosphate). The Sigma-54 factor interaction domain maps to I136–L366. ATP contacts are provided by residues G164–E171 and A227–E236. Positions V414–S433 form a DNA-binding region, H-T-H motif.

In terms of processing, phosphorylated by GlrK.

The protein localises to the cytoplasm. Member of the two-component regulatory system GlrR/GlrK that up-regulates transcription of the glmY sRNA when cells enter the stationary growth phase. Regulates glmY transcription by binding to three conserved sites in the purL-glmY intergenic region. The polypeptide is Transcriptional regulatory protein GlrR (glrR) (Escherichia coli (strain K12)).